Here is a 143-residue protein sequence, read N- to C-terminus: MLMPKRTKHRKMFRGRMKGAAHKGNFVAFGDYGLQALEPSWITNRQIESCRVAINRTFKREGKTYIRIFPDKPITARPAGVRMGKGKGNVEGWVSVVRPGRILFEVSGVTEEKAAAALRKAAMKLPIRCKVVKREEKENGGEN.

It belongs to the universal ribosomal protein uL16 family. In terms of assembly, part of the 50S ribosomal subunit.

In terms of biological role, binds 23S rRNA and is also seen to make contacts with the A and possibly P site tRNAs. This is Large ribosomal subunit protein uL16 from Fusobacterium nucleatum subsp. nucleatum (strain ATCC 25586 / DSM 15643 / BCRC 10681 / CIP 101130 / JCM 8532 / KCTC 2640 / LMG 13131 / VPI 4355).